Consider the following 89-residue polypeptide: Small ribosomal subunit protein uS15 (89 aa).

Belongs to the universal ribosomal protein uS15 family. As to quaternary structure, part of the 30S ribosomal subunit. Forms a bridge to the 50S subunit in the 70S ribosome, contacting the 23S rRNA.

In terms of biological role, one of the primary rRNA binding proteins, it binds directly to 16S rRNA where it helps nucleate assembly of the platform of the 30S subunit by binding and bridging several RNA helices of the 16S rRNA. Forms an intersubunit bridge (bridge B4) with the 23S rRNA of the 50S subunit in the ribosome. The chain is Small ribosomal subunit protein uS15 from Treponema denticola (strain ATCC 35405 / DSM 14222 / CIP 103919 / JCM 8153 / KCTC 15104).